Reading from the N-terminus, the 164-residue chain is F-box protein At4g05010 (164 aa).

A disordered region spans residues 38–57 (SKRAPENDSPPVKRPSHETT). In terms of domain architecture, F-box spans 61–109 (RSLLETLHQDILIRVLCHVDHEDLATLKRVSKTIRKAVIEAKKSHFDYS).

The protein is F-box protein At4g05010 of Arabidopsis thaliana (Mouse-ear cress).